The primary structure comprises 729 residues: Serine/threonine-protein kinase TBK1 (729 aa).

The region spanning 9–310 (WLLSDILGQG…ETSDILHRMV (302 aa)) is the Protein kinase domain. Residue 15 to 23 (LGQGATANV) participates in ATP binding. Lys30 participates in a covalent cross-link: Glycyl lysine isopeptide (Lys-Gly) (interchain with G-Cter in ubiquitin). ATP is bound at residue Lys38. Residue Asp135 is the Proton acceptor of the active site. At Ser172 the chain carries Phosphoserine; by autocatalysis and IKKB. Residues 309–385 (MVIHVFSLQQ…ENPIFVVSRE (77 aa)) form the Ubiquitin-like domain. Residue Lys401 forms a Glycyl lysine isopeptide (Lys-Gly) (interchain with G-Cter in ubiquitin) linkage. 2 coiled-coil regions span residues 407-657 (DLDG…LQET) and 658-713 (LPQK…ILER). An N6-methyllysine; by SETD4 modification is found at Lys607. The interval 621 to 729 (RKMLHLRKQL…DGGLRNVDCL (109 aa)) is interaction with AZI2, TANK and TBKBP1. Lys670 is covalently cross-linked (Glycyl lysine isopeptide (Lys-Gly) (interchain with G-Cter in ubiquitin)). At Ser716 the chain carries Phosphoserine.

This sequence belongs to the protein kinase superfamily. Ser/Thr protein kinase family. I-kappa-B kinase subfamily. As to quaternary structure, homodimer. Interacts with DDX3X, TIRAP and TRAF2. Part of a ternary complex consisting of TANK, TRAF2 and TBK1. Interacts with AZI2, TANK and TBKBP1; these interactions are mutually exclusive and mediate TBK1 activation. Interacts with GSK3B; this interaction promotes TBK1 self-association and autophosphorylation. Interacts with SIKE1; SIKE1 is associated with TBK1 under physiological condition and dissociated from TBK1 upon viral infection or TLR3 stimulation. Interacts with IRF3, leading to IRF3 phosphorylation. Interacts with RIGI. Interacts with CYLD. Interacts with OPTN and TRAF3. Interacts with SRC. Interacts with the exocyst complex subunit SEC5/EXOC2; this interaction is sufficient to trigger TBK1 activity. Interacts with STING1, leading to STING1 phosphorylation. Interacts with IFIT3 (via N-terminus). Interacts with MAVS; interaction only takes place in the presence of IFIT3 and leads to MAVS phosphorylation. Interacts (via protein kinase domain) with TTLL12 (via TTL domain); the interaction prevents MAVS binding to TBK1. Interacts with TICAM1; this interaction is enhanced in the presence of WDFY1 and leads to TICAM1 phosphorylation. Interacts with TRIM26. Interacts with TRIM23. Interacts with TTC4 and IKBKE. Interacts with HNRNPA2B1. Interacts with DDX3X. Interacts with TRIM14. Interacts with CEP170; efficient complex formation may be dependent on the presence of CCDC61. Interacts with TRAF3IP3. Interacts with HSP90AA1; the interaction mediates TBK1 association with TOMM70. Interacts with TAX1BP1. Interacts with kinase IKBKB; the complex interacts with STAT1, leading to phosphorylation of STAT1 on 'Thr-749' by IKBKB. Interacts with ICOS; this interaction is critical for the maturation of T follicular regulatory cells. Interacts with RNF144B; this interaction prevents TBK1 phosphorylation and subsequent activation. Interacts with ASB8; this interaction promotes TBK1 proteasomal degradation. Forms a ternary complex with ZNF268 and SETD4; the interaction with SETD4 is ZNF268-dependent and leads to TBK1 monomethylation, which enhances its interaction with IRF3 and MAVS. In terms of assembly, (Microbial infection) Interacts with Borna disease virus (BDV) P protein leading to its phosphorylation. (Microbial infection) Interacts with Ebola virus protein VP35. As to quaternary structure, (Microbial infection) Interacts with HCV NS3; this interaction leads to inhibition of cellular antiviral response by blocking necessary interactions between the TBK1 and its substrates IRF3 and IRF7. In terms of assembly, (Microbial infection) Interacts with human herpesvirus 1 protein ICP34.5. (Microbial infection) Interacts with Zika virus non-structural protein 1/NS1 and non-structural protein 4B/NS4B. As to quaternary structure, (Microbial infection) Interacts with SARS-CoV-2 non-structural protein 6; this interaction decreases IRF3 phosphorylation by 57%, which leads to reduced IFN-beta (IFNB) production. Interacts with SARS-CoV-2 helicase; this interaction inhibits TBK1 phosphorylation and decreases IRF3 phosphorylation by 75%, which leads to reduced IFN-beta production. Interacts with SARS-CoV-2 M protein; the interaction promotes TBK1 degradation via 'Lys-48'-linked ubiquitination. In terms of assembly, (Microbial infection) Interacts with human cytomegalovirus protein UL35; this interaction inhibits type I interferon production. (Microbial infection) Interacts with heartland virus NSs; this interaction antagonizes TBK1 phosphorylation and inhibits TBK1-IRF3 interaction and thus the establishment of an antiviral state. As to quaternary structure, (Microbial infection) Interacts (via N-terminus) with Severe fever with thrombocytopenia virus (SFTSV) NSs; this interaction antagonizes TBK1 phosphorylation and sequesters TBK1 in NSs-induced cytoplasmic inclusion bodies thereby inhibiting the IFN responses. Post-translationally, autophosphorylation at Ser-172 activates the kinase, and is an essential step for virus-triggered signaling. Phosphorylated by IKBKB/IKKB at Ser-172. Phosphorylation requires homodimerization and ubiquitination at Lys-30 and Lys-401. Dephosphorylated at Ser-172 by PPM1B and this negatively regulates its role in mediating antiviral response. 'Lys-63'-linked polyubiquitination by MIB1 after RNA virus infection, or by NRDP1 after LPS stimulation at Lys-30 and Lys-401, participates in kinase activation. 'Lys-48'-linked polyubiquitination at Lys-670 by DTX4 leads to proteasomal degradation. 'Lys-48'-linked polyubiquitination by TRAIP also leads to proteasomal degradation. 'Lys-48'-linked polyubiquitination by TRAF7; leading to proteasomal degradation. 'Lys-63'-linked polyubiquitination by RNF128 at Lys-30 and Lys-401 leads to the activation of antiviral responses. 'Lys-48'-linked polyubiquitination after 'lys-33'-linked deubiquitination by USP38 promotes TBK1 degradation. In terms of processing, (Microbial infection) Interaction with SARS-CoV-2 M protein induces 'Lys-48'-linked ubiquitination which leads to proteasomal degradation. Post-translationally, (Microbial infection) Deubiquitinated by Epstein-Barr virus BPLF1 on both 'Lys-48' and 'Lys-63'-linked ubiquitin chains; leading to inhibition of type I interfewron production. Monomethylation at Lys-607 by SETD4 maximizes TBK1 activation and promotes efficient interferon signaling. As to expression, ubiquitous with higher expression in testis. Expressed in the ganglion cells, nerve fiber layer and microvasculature of the retina.

The protein localises to the cytoplasm. It catalyses the reaction L-seryl-[protein] + ATP = O-phospho-L-seryl-[protein] + ADP + H(+). The catalysed reaction is L-threonyl-[protein] + ATP = O-phospho-L-threonyl-[protein] + ADP + H(+). In terms of biological role, serine/threonine kinase that plays an essential role in regulating inflammatory responses to foreign agents. Following activation of toll-like receptors by viral or bacterial components, associates with TRAF3 and TANK and phosphorylates interferon regulatory factors (IRFs) IRF3 and IRF7 as well as DDX3X. This activity allows subsequent homodimerization and nuclear translocation of the IRFs leading to transcriptional activation of pro-inflammatory and antiviral genes including IFNA and IFNB. In order to establish such an antiviral state, TBK1 form several different complexes whose composition depends on the type of cell and cellular stimuli. Plays a key role in IRF3 activation: acts by first phosphorylating innate adapter proteins MAVS, STING1 and TICAM1 on their pLxIS motif, leading to recruitment of IRF3, thereby licensing IRF3 for phosphorylation by TBK1. Phosphorylated IRF3 dissociates from the adapter proteins, dimerizes, and then enters the nucleus to induce expression of interferons. Thus, several scaffolding molecules including FADD, TRADD, MAVS, AZI2, TANK or TBKBP1/SINTBAD can be recruited to the TBK1-containing-complexes. Under particular conditions, functions as a NF-kappa-B effector by phosphorylating NF-kappa-B inhibitor alpha/NFKBIA, IKBKB or RELA to translocate NF-Kappa-B to the nucleus. Restricts bacterial proliferation by phosphorylating the autophagy receptor OPTN/Optineurin on 'Ser-177', thus enhancing LC3 binding affinity and antibacterial autophagy. Phosphorylates SMCR8 component of the C9orf72-SMCR8 complex, promoting autophagosome maturation. Phosphorylates ATG8 proteins MAP1LC3C and GABARAPL2, thereby preventing their delipidation and premature removal from nascent autophagosomes. Seems to play a role in energy balance regulation by sustaining a state of chronic, low-grade inflammation in obesity, which leads to a negative impact on insulin sensitivity. Attenuates retroviral budding by phosphorylating the endosomal sorting complex required for transport-I (ESCRT-I) subunit VPS37C. Phosphorylates Borna disease virus (BDV) P protein. Plays an essential role in the TLR3- and IFN-dependent control of herpes virus HSV-1 and HSV-2 infections in the central nervous system. Acts both as a positive and negative regulator of the mTORC1 complex, depending on the context: activates mTORC1 in response to growth factors by catalyzing phosphorylation of MTOR, while it limits the mTORC1 complex by promoting phosphorylation of RPTOR. Acts as a positive regulator of the mTORC2 complex by mediating phosphorylation of MTOR, leading to increased phosphorylation and activation of AKT1. Phosphorylates and activates AKT1. Involved in the regulation of TNF-induced RIPK1-mediated cell death, probably acting via CYLD phosphorylation that in turn controls RIPK1 ubiquitination status. Also participates in the differentiation of T follicular regulatory cells together with the receptor ICOS. In Homo sapiens (Human), this protein is Serine/threonine-protein kinase TBK1.